Consider the following 391-residue polypeptide: Oxytocin receptor (391 aa).

Residues Met-1–Leu-38 are Extracellular-facing. N-linked (GlcNAc...) asparagine glycosylation is found at Asn-8, Asn-15, and Asn-26. Residues Ala-39–Ala-63 traverse the membrane as a helical segment. At Leu-64–Leu-74 the chain is on the cytoplasmic side. The helical transmembrane segment at Phe-75–Leu-97 threads the bilayer. Topologically, residues Leu-98–Arg-113 are extracellular. A disulfide bridge connects residues Cys-112 and Cys-187. The helical transmembrane segment at Leu-114–Leu-135 threads the bilayer. Residues Asp-136–Arg-154 are Cytoplasmic-facing. A helical transmembrane segment spans residues Leu-155 to Phe-175. Residues Ser-176–Thr-202 lie on the Extracellular side of the membrane. A helical transmembrane segment spans residues Trp-203 to Phe-225. Over Lys-226–Lys-277 the chain is Cytoplasmic. A helical transmembrane segment spans residues Met-278 to Val-296. Topologically, residues Gln-297–Ser-311 are extracellular. The helical transmembrane segment at Pro-312 to Phe-334 threads the bilayer. The Cytoplasmic segment spans residues Thr-335 to Leu-391. Ser-368 and Ser-370 each carry phosphoserine.

This sequence belongs to the G-protein coupled receptor 1 family. Vasopressin/oxytocin receptor subfamily.

The protein localises to the cell membrane. Its function is as follows. Receptor for oxytocin. The activity of this receptor is mediated by G proteins which activate a phosphatidylinositol-calcium second messenger system. This is Oxytocin receptor (OXTR) from Bos taurus (Bovine).